Reading from the N-terminus, the 362-residue chain is Protein ABHD12B (362 aa).

Belongs to the serine esterase family.

This is Protein ABHD12B from Homo sapiens (Human).